The chain runs to 538 residues: MNPALLITASGLPALLDVAAPHLEWGPLAPVFVLMAGACVAVLVEAFVPRSGRRSTQIIVTVATLVVAIASTLTTIARGTRIVAGQGTLAPDGPTLATWVILLATGLGTVVLFAERVGTTQTAFVASASSVPGSPLEAKAEQEHREHTEVYPLLMFAALGMMCFAAANDLIMMFVALEIFSLPLYLLCGMSRRRRLLSQEAALKYFLLGALSSALFLYGIVLLYGCAGSFKLGDLAAAGVTQVGSSKLIVAGMILVAVGLLFKIGAVPFASWTPDVYTGAPTPVSGWMAVATKLVALVGLMRVLYVGLGAMRWDWQIVLAVVAVASMGVGAIVGLAQTDMKRLLAYSAIAHAGFVLVGVVGAWTTQTGMAEGQTGSVSSVLVYMTAYGLASIGFWLLILMVRRAGGESTEIASWAGIGRSHPWIGVLVVIFVLSFAGIPLTAGFTGKLVVFLAGWRGGYAWLVLIGVLFSLVAAAFYLRIIVVVFFRSAKEGDDPVEVAEPSIAGWITLIVCAVFTIVMGVAPQPIIDLFNQASTFLR.

14 consecutive transmembrane segments (helical) span residues 28–48 (LAPVFVLMAGACVAVLVEAFV), 57–77 (QIIVTVATLVVAIASTLTTIA), 94–114 (PTLATWVILLATGLGTVVLFA), 147–167 (HTEVYPLLMFAALGMMCFAAA), 170–190 (LIMMFVALEIFSLPLYLLCGM), 206–226 (FLLGALSSALFLYGIVLLYGC), 249–269 (IVAGMILVAVGLLFKIGAVPF), 288–308 (MAVATKLVALVGLMRVLYVGL), 315–335 (WQIVLAVVAVASMGVGAIVGL), 343–363 (LLAYSAIAHAGFVLVGVVGAW), 380–400 (VLVYMTAYGLASIGFWLLILM), 424–444 (IGVLVVIFVLSFAGIPLTAGF), 458–478 (GYAWLVLIGVLFSLVAAAFYL), and 503–523 (IAGWITLIVCAVFTIVMGVAP).

The protein belongs to the complex I subunit 2 family. NDH-1 is composed of 14 different subunits. Subunits NuoA, H, J, K, L, M, N constitute the membrane sector of the complex.

The protein localises to the cell membrane. The enzyme catalyses a quinone + NADH + 5 H(+)(in) = a quinol + NAD(+) + 4 H(+)(out). Its function is as follows. NDH-1 shuttles electrons from NADH, via FMN and iron-sulfur (Fe-S) centers, to quinones in the respiratory chain. The immediate electron acceptor for the enzyme in this species is believed to be a menaquinone. Couples the redox reaction to proton translocation (for every two electrons transferred, four hydrogen ions are translocated across the cytoplasmic membrane), and thus conserves the redox energy in a proton gradient. The sequence is that of NADH-quinone oxidoreductase subunit N from Cutibacterium acnes (strain DSM 16379 / KPA171202) (Propionibacterium acnes).